The primary structure comprises 382 residues: 8-amino-7-oxononanoate synthase (382 aa).

Arg-26 is a binding site for substrate. 104-105 contacts pyridoxal 5'-phosphate; the sequence is GY. Residue His-129 participates in substrate binding. Pyridoxal 5'-phosphate contacts are provided by residues Ser-175, 200-203, and 232-235; these read DEAH and TLSK. Lys-235 carries the post-translational modification N6-(pyridoxal phosphate)lysine. Thr-345 contributes to the substrate binding site.

This sequence belongs to the class-II pyridoxal-phosphate-dependent aminotransferase family. BioF subfamily. In terms of assembly, homodimer. It depends on pyridoxal 5'-phosphate as a cofactor.

The enzyme catalyses 6-carboxyhexanoyl-[ACP] + L-alanine + H(+) = (8S)-8-amino-7-oxononanoate + holo-[ACP] + CO2. The protein operates within cofactor biosynthesis; biotin biosynthesis. Functionally, catalyzes the decarboxylative condensation of pimeloyl-[acyl-carrier protein] and L-alanine to produce 8-amino-7-oxononanoate (AON), [acyl-carrier protein], and carbon dioxide. The protein is 8-amino-7-oxononanoate synthase of Mycobacterium sp. (strain KMS).